Consider the following 289-residue polypeptide: Heme oxygenase 1, chloroplastic (289 aa).

The transit peptide at 1-64 (MAPAAASLTA…SASSSRRMVV (64 aa)) directs the protein to the chloroplast. Residue His-96 coordinates heme b.

Belongs to the heme oxygenase family.

Its subcellular location is the plastid. The protein resides in the chloroplast. It catalyses the reaction heme b + 3 reduced [NADPH--hemoprotein reductase] + 3 O2 = biliverdin IXalpha + CO + Fe(2+) + 3 oxidized [NADPH--hemoprotein reductase] + 3 H2O + H(+). Catalyzes the opening of the heme ring to form the open-chain tetrapyrrole biliverdin IX with the release of iron and carbon monoxide (CO). Is a key enzyme in the synthesis of the chromophore of the phytochrome family of plant photoreceptors. Essential for photoperiod response and repression of flowering through cytochromes that inhibit flowering by affecting both HD1 and EHD1 flowering pathways. In Oryza sativa subsp. japonica (Rice), this protein is Heme oxygenase 1, chloroplastic (HO1).